We begin with the raw amino-acid sequence, 204 residues long: MTAEQKVELAAKLEEQKIDLDKPEVEDDDDNDEDDSEDDDEAEGHDGEAGGRSKQSRSEKKSRKAMLKLGMKPITGVSRVTVKKSKNILFVISKPDVFKSPASDTYVIFGEAKIEDLSSQLQSQAAEQFKAPNLSNVISQGETSSAATAAAVQDDDDEEVDEEGVEPKDIELVMTQAGVSKPRAVKALKLANGDIVSAIMELTT.

Basic and acidic residues predominate over residues 1–23; the sequence is MTAEQKVELAAKLEEQKIDLDKP. Disordered regions lie at residues 1–68 and 141–165; these read MTAE…AMLK and GETS…EEGV. The span at 24–43 shows a compositional bias: acidic residues; sequence EVEDDDDNDEDDSEDDDEAE. Ser36 carries the post-translational modification Phosphoserine. Positions 44 to 59 are enriched in basic and acidic residues; it reads GHDGEAGGRSKQSRSE. The NAC-A/B domain maps to 56–121; it reads SRSEKKSRKA…AKIEDLSSQL (66 aa). A compositionally biased stretch (low complexity) spans 141-152; that stretch reads GETSSAATAAAV. The span at 153–164 shows a compositional bias: acidic residues; it reads QDDDDEEVDEEG. The region spanning 159-204 is the UBA domain; it reads EVDEEGVEPKDIELVMTQAGVSKPRAVKALKLANGDIVSAIMELTT.

The protein belongs to the NAC-alpha family.

In terms of biological role, may promote appropriate targeting of ribosome-nascent polypeptide complexes. This chain is Nascent polypeptide-associated complex subunit alpha-like protein 3, found in Arabidopsis thaliana (Mouse-ear cress).